We begin with the raw amino-acid sequence, 154 residues long: Transcriptional regulator MraZ (154 aa).

2 SpoVT-AbrB domains span residues 6 to 53 (NSEA…PENV) and 83 to 126 (VEVI…SKEI).

Belongs to the MraZ family. As to quaternary structure, forms oligomers.

Its subcellular location is the cytoplasm. The protein localises to the nucleoid. This Phocaeicola vulgatus (strain ATCC 8482 / DSM 1447 / JCM 5826 / CCUG 4940 / NBRC 14291 / NCTC 11154) (Bacteroides vulgatus) protein is Transcriptional regulator MraZ.